The sequence spans 250 residues: Aquaporin (250 aa).

Residues 1 to 15 (MTRETLKTLQSTFGE) are Cytoplasmic-facing. A helical membrane pass occupies residues 16 to 36 (MVASFVFGFAVYSALLGSALT). Residues 37–42 (EQSAAR) are Extracellular-facing. The helical transmembrane segment at 43–63 (VIVGLTVGFSGICVIYSFCDV) threads the bilayer. Over 64 to 86 (TVAHFNPAITLAAILTCKLGVLR) the chain is Cytoplasmic. Positions 69–71 (NPA) match the NPA motif. A helical transmembrane segment spans residues 87–107 (GIGYIVAQYIGFILAVCALLP). Residues 108–133 (CSPVGYKETLNIIRPTPSPFGGDNLN) lie on the Extracellular side of the membrane. Residues 134–154 (VFFTEFFLTAILVHVAFATAV) form a helical membrane-spanning segment. The Cytoplasmic segment spans residues 155–179 (NPYKPKTDTEGKFVDPDEEEPVDRR). The helical transmembrane segment at 180–200 (ITAPLCIGLTLGFLAFLGLAS) threads the bilayer. Residues 201 to 224 (SGGAFNPGLTLAPVIMSNTWNHFW) lie on the Extracellular side of the membrane. Residues 206-208 (NPG) carry the NPG motif. A helical transmembrane segment spans residues 225–245 (AYFAGQYLGGFVGGLLQVLVL). Over 246 to 250 (YKLSF) the chain is Cytoplasmic.

It belongs to the MIP/aquaporin (TC 1.A.8) family.

It is found in the cell membrane. Water channel required to facilitate the transport of water across membranes. Involved in osmotolerance. This chain is Aquaporin (AQP), found in Encephalitozoon cuniculi (strain GB-M1) (Microsporidian parasite).